A 205-amino-acid chain; its full sequence is Protein Nef (205 aa).

The N-myristoyl glycine; by host moiety is linked to residue Gly2. Ser6 bears the Phosphoserine; by host mark. The segment at 62–65 (DNEE) is acidic; interacts with host PACS1 and PACS2; stabilizes the interaction of NEF/MHC-I with host AP1M1; necessary for MHC-I internalization. An SH3-binding; interaction with Src family tyrosine kinases region spans residues 69 to 78 (PVRPQVPTRP). The PxxP; stabilizes the interaction of NEF/MHC-I with host AP1M1; necessary for MHC-I internalization motif lies at 72 to 75 (PQVP). The mediates dimerization, Nef-PTE1 interaction stretch occupies residues 108–124 (EILDLWVYHTQGFFPDW). The tract at residues 148 to 180 (LTEEQVEQANEGDNNCLLHPICQHGMEDEDKEV) is binding to ATP6V1H. Residues 164 to 165 (LL) carry the Dileucine internalization motif; necessary for CD4 internalization motif. The Diacidic; necessary for CD4 internalization signature appears at 174-175 (ED).

Belongs to the lentivirus primate group Nef protein family. As to quaternary structure, monomer; cytosolic form. Homodimer; membrane bound form. Interacts with Nef associated p21-activated kinase (PAK2); this interaction activates PAK2. Associates with the Nef-MHC-I-AP1 complex; this complex is required for MHC-I internalization. Interacts (via C-terminus) with host PI3-kinase. Interacts with host PACS1; this interaction seems to be weak. Interacts with host PACS2. Interacts with host LCK and MAPK3; these interactions inhibit the kinase activity of the latter. Interacts with host ATP6V1H; this interaction may play a role in CD4 endocytosis. Associates with the CD4-Nef-AP2 complex; this complex is required for CD4 internalization. Interacts with host AP2 subunit alpha and AP2 subunit sigma2. Interacts with TCR-zeta chain; this interaction up-regulates the Fas ligand (FasL) surface expression. Interacts with host HCK, LYN, and SRC; these interactions activate the Src family kinases. Interacts with MAP3K5; this interaction inhibits the Fas and TNFR-mediated death signals. Interacts with beta-COP and PTE1. Interacts with human RACK1; this increases Nef phosphorylation by PKC. Interacts with TP53; this interaction decreases the half-life of TP53, protecting the infected cell against p53-mediated apoptosis. In terms of processing, the virion-associated Nef proteins are cleaved by the viral protease to release the soluble C-terminal core protein. Nef is probably cleaved concomitantly with viral structural proteins on maturation of virus particles. Myristoylated. Post-translationally, phosphorylated on serine residues, probably by host PKCdelta and theta.

Its subcellular location is the host cell membrane. The protein localises to the virion. It localises to the secreted. The protein resides in the host Golgi apparatus membrane. Functionally, factor of infectivity and pathogenicity, required for optimal virus replication. Alters numerous pathways of T-lymphocyte function and down-regulates immunity surface molecules in order to evade host defense and increase viral infectivity. Alters the functionality of other immunity cells, like dendritic cells, monocytes/macrophages and NK cells. In terms of biological role, in infected CD4(+) T-lymphocytes, down-regulates the surface MHC-I, mature MHC-II, CD4, CD28, CCR5 and CXCR4 molecules. Mediates internalization and degradation of host CD4 through the interaction of with the cytoplasmic tail of CD4, the recruitment of AP-2 (clathrin adapter protein complex 2), internalization through clathrin coated pits, and subsequent transport to endosomes and lysosomes for degradation. Diverts host MHC-I molecules to the trans-Golgi network-associated endosomal compartments by an endocytic pathway to finally target them for degradation. MHC-I down-regulation may involve AP-1 (clathrin adapter protein complex 1) or possibly Src family kinase-ZAP70/Syk-PI3K cascade recruited by PACS2. In consequence infected cells are masked for immune recognition by cytotoxic T-lymphocytes. Decreasing the number of immune receptors also prevents reinfection by more HIV particles (superinfection). Down-regulates host SERINC3 and SERINC5 thereby excluding these proteins from the viral particles. Virion infectivity is drastically higher when SERINC3 or SERINC5 are excluded from the viral envelope, because these host antiviral proteins impair the membrane fusion event necessary for subsequent virion penetration. Bypasses host T-cell signaling by inducing a transcriptional program nearly identical to that of anti-CD3 cell activation. Interaction with TCR-zeta chain up-regulates the Fas ligand (FasL). Increasing surface FasL molecules and decreasing surface MHC-I molecules on infected CD4(+) cells send attacking cytotoxic CD8+ T-lymphocytes into apoptosis. Its function is as follows. Plays a role in optimizing the host cell environment for viral replication without causing cell death by apoptosis. Protects the infected cells from apoptosis in order to keep them alive until the next virus generation is ready to strike. Inhibits the Fas and TNFR-mediated death signals by blocking MAP3K5/ASK1. Decreases the half-life of TP53, protecting the infected cell against p53-mediated apoptosis. Inhibits the apoptotic signals regulated by the Bcl-2 family proteins through the formation of a Nef/PI3-kinase/PAK2 complex that leads to activation of PAK2 and induces phosphorylation of host BAD. Functionally, extracellular Nef protein targets CD4(+) T-lymphocytes for apoptosis by interacting with CXCR4 surface receptors. The polypeptide is Protein Nef (Simian immunodeficiency virus (isolate CPZ GAB1) (SIV-cpz)).